A 208-amino-acid chain; its full sequence is Thiamine-phosphate synthase (208 aa).

Residues Q37–R39 and N70 contribute to the 4-amino-2-methyl-5-(diphosphooxymethyl)pyrimidine site. Mg(2+) contacts are provided by D71 and D90. T109 lines the 4-amino-2-methyl-5-(diphosphooxymethyl)pyrimidine pocket. T135–S137 serves as a coordination point for 2-[(2R,5Z)-2-carboxy-4-methylthiazol-5(2H)-ylidene]ethyl phosphate. A 4-amino-2-methyl-5-(diphosphooxymethyl)pyrimidine-binding site is contributed by K138. G166 is a 2-[(2R,5Z)-2-carboxy-4-methylthiazol-5(2H)-ylidene]ethyl phosphate binding site.

This sequence belongs to the thiamine-phosphate synthase family. Mg(2+) serves as cofactor.

It catalyses the reaction 2-[(2R,5Z)-2-carboxy-4-methylthiazol-5(2H)-ylidene]ethyl phosphate + 4-amino-2-methyl-5-(diphosphooxymethyl)pyrimidine + 2 H(+) = thiamine phosphate + CO2 + diphosphate. The enzyme catalyses 2-(2-carboxy-4-methylthiazol-5-yl)ethyl phosphate + 4-amino-2-methyl-5-(diphosphooxymethyl)pyrimidine + 2 H(+) = thiamine phosphate + CO2 + diphosphate. It carries out the reaction 4-methyl-5-(2-phosphooxyethyl)-thiazole + 4-amino-2-methyl-5-(diphosphooxymethyl)pyrimidine + H(+) = thiamine phosphate + diphosphate. Its pathway is cofactor biosynthesis; thiamine diphosphate biosynthesis; thiamine phosphate from 4-amino-2-methyl-5-diphosphomethylpyrimidine and 4-methyl-5-(2-phosphoethyl)-thiazole: step 1/1. Condenses 4-methyl-5-(beta-hydroxyethyl)thiazole monophosphate (THZ-P) and 2-methyl-4-amino-5-hydroxymethyl pyrimidine pyrophosphate (HMP-PP) to form thiamine monophosphate (TMP). This is Thiamine-phosphate synthase from Salinispora arenicola (strain CNS-205).